We begin with the raw amino-acid sequence, 33 residues long: MSDINATRLPIWGIGCNPSVGDEVTALLTSGEA.

A propeptide spanning residues 1-10 is cleaved from the precursor; sequence MSDINATRLP. Ile11 carries the (3R,4R)-4,5-dihydroxyisoleucine; in form alpha-amanitin modification. Ile11 carries the (3R,4S)-4-hydroxyisoleucine; in form gamma-amanitin modification. The segment at residues 11–18 is a cross-link (cyclopeptide (Ile-Pro)); sequence IWGIGCNP. The 2'-cysteinyl-6'-hydroxytryptophan sulfoxide (Trp-Cys) cross-link spans 12 to 16; sequence WGIGC. Residue Pro18 is modified to 4-hydroxyproline. The propeptide occupies 19 to 33; it reads SVGDEVTALLTSGEA.

This sequence belongs to the MSDIN fungal toxin family. In terms of processing, processed by the macrocyclase-peptidase enzyme POPB to yield a toxic cyclic decapeptide. POPB first removes 10 residues from the N-terminus. Conformational trapping of the remaining peptide forces the enzyme to release this intermediate rather than proceed to macrocyclization. The enzyme rebinds the remaining peptide in a different conformation and catalyzes macrocyclization of the N-terminal 8 residues.

Its function is as follows. Major toxin belonging to the bicyclic octapeptides amatoxins that acts by binding non-competitively to RNA polymerase II and greatly slowing the elongation of transcripts from target promoters. The protein is Alpha-amanitin proprotein of Amanita fuliginea (East Asian brown death cap).